Consider the following 31-residue polypeptide: Delta-actitoxin-Dar1b (31 aa).

The protein belongs to the sea anemone short toxin (type III) family. Post-translationally, contains 4 disulfide bonds.

It localises to the secreted. Its subcellular location is the nematocyst. Functionally, binds specifically to voltage-gated sodium channels (Nav), thereby delaying their inactivation during signal transduction. The polypeptide is Delta-actitoxin-Dar1b (Dofleinia armata (Armed anemone)).